Reading from the N-terminus, the 64-residue chain is Large ribosomal subunit protein bL32 (64 aa).

The tract at residues 1–35 is disordered; the sequence is MAVQKSRVTPSRRGMRRAHDALSAKQLSTDPTTGE.

The protein belongs to the bacterial ribosomal protein bL32 family.

This is Large ribosomal subunit protein bL32 from Stenotrophomonas maltophilia (strain R551-3).